The following is a 338-amino-acid chain: 2-oxoglutarate-dependent dioxygenase ecdG (338 aa).

In terms of domain architecture, Fe2OG dioxygenase spans 165 to 273; the sequence is PSVTNLGFLR…KYTLAYFVRP (109 aa). Fe cation is bound by residues His-190, Asp-192, and His-249. Lys-264 lines the 2-oxoglutarate pocket.

This sequence belongs to the iron/ascorbate-dependent oxidoreductase family. Fe(2+) serves as cofactor.

The protein operates within antifungal biosynthesis. 2-oxoglutarate-dependent dioxygenase; part of the gene cluster that mediates the biosynthesis of echinocandin B, a fungal lipidated cyclic hexapeptide that acts as an antifungal agent. Linoleoyl-AMP, produced by the fatty-acyl-AMP ligase ecdI, is transferred to the initiation carrier domain (T0) of ecdA. The linoleoyl-S-phosphopantetheinyl-T0 is sequentially extended with L-ornithine, L-threonine, L-proline, L-homotyrosine, L-threonine, and 4R-methyl-L-proline to form the linear hexapeptide. Thereafter, the terminal condensation (C7) performs macrocyclization of the NRPS product and the cyclic scaffold is released from ecdA. All six of the amino acid residues are hydroxylated, including 4R,5R-dihydroxy-L-ornithine, 4R-hydroxyl-L-proline, 3S,4S-dihydroxy-L-homotyrosine, and 3S-hydroxyl-4S-methyl-L-prolin. In the pathway, all the hydroxylation reactions are proposed to occur following completion of the cyclic peptide, so the unhydroxylated precursor produced by ecdA will undergo six rounds of hydroxylation. Five hydroxylase genes (ecdG, ecdH, ecdK, htyE and htyF) are embedded within the echinocandin B (ecd) and L-homotyrosine (hty) clusters. This Aspergillus rugulosus (Emericella rugulosa) protein is 2-oxoglutarate-dependent dioxygenase ecdG.